The sequence spans 307 residues: Potassium channel subfamily K member 7 (307 aa).

Residues 1 to 10 are Cytoplasmic-facing; the sequence is MGGLRPWSRY. A helical membrane pass occupies residues 11–31; that stretch reads GLLVVAHLLALGLGAVVFQAL. Asn-83 carries an N-linked (GlcNAc...) asparagine glycan. An intramembrane region (pore-forming) is located at residues 92-119; sequence LPSALLFAASILTTTGYGHMAPLSPGGK. Residues 120–140 traverse the membrane as a helical segment; that stretch reads AFCMVYAALGLPASLALVATL. The Cytoplasmic portion of the chain corresponds to 141 to 170; it reads RHCLLPVLSRPRAWVAVHWQLSPARAALLQ. The helical transmembrane segment at 171–191 threads the bilayer; that stretch reads AVALGLLVASSFVLLPALVLW. The segment at residues 199–227 is an intramembrane region (pore-forming); sequence LLGAVYFCFSSLSTIGLEDLLPGRGRSLH. A helical transmembrane segment spans residues 233-253; that stretch reads LGQLALLGYLLLGLLAMLLAV. Residues 254-307 are Cytoplasmic-facing; that stretch reads ETFSELPQVRAMGKFFRPSGPVTAEDQGGILGQDELALSTLPPAAPASGQAPAC.

This sequence belongs to the two pore domain potassium channel (TC 1.A.1.8) family. Homodimer.

Its subcellular location is the membrane. Probable potassium channel subunit. No channel activity observed in vitro as protein remains in the endoplasmic reticulum. May need to associate with an as yet unknown partner in order to reach the plasma membrane. The sequence is that of Potassium channel subfamily K member 7 (KCNK7) from Homo sapiens (Human).